The chain runs to 239 residues: Outer membrane protein PagN (239 aa).

An N-terminal signal peptide occupies residues 1–22; the sequence is MKNFFAVCIIPLVVAWSATASA. The Periplasmic segment spans residues 23-26; sequence KEGI. Residues 27 to 36 traverse the membrane as a beta stranded segment; that stretch reads YITGKAGTSV. At 37 to 65 the chain is on the extracellular side; that stretch reads VNVYGINSTFSQDEIVNGHATLPDRTKGV. Residues 66 to 76 form a beta stranded membrane-spanning segment; it reads FGGGVAIGYDF. Residues 77–81 lie on the Periplasmic side of the membrane; sequence YDPFQ. The beta stranded transmembrane segment at 82–92 threads the bilayer; the sequence is LPVRLELDTTF. The Extracellular segment spans residues 93 to 120; it reads RGETDAKGGQDIIAFGDPVHINVKNQVR. Residues 121–132 traverse the membrane as a beta stranded segment; that stretch reads MTTYMVNGYYDF. The Periplasmic segment spans residues 133–137; sequence HNSTA. A beta stranded transmembrane segment spans residues 138–148; that stretch reads FTPYISAGVGL. Residues 149–174 lie on the Extracellular side of the membrane; sequence AHVKLSNNTIPVGFGINETLSASKNN. Residues 175-185 form a beta stranded membrane-spanning segment; sequence FAWGAGIGAKY. The Periplasmic segment spans residues 186–190; sequence AVTDN. The chain crosses the membrane as a beta stranded span at residues 191-200; sequence IMIDASYKYI. The Extracellular portion of the chain corresponds to 201-230; it reads NAGKVSISKNHYAGDEHTAYDADTKAASND. Residues 231–239 traverse the membrane as a beta stranded segment; the sequence is FMLGITYAF.

It localises to the cell outer membrane. In terms of biological role, haemagglutinin that facilitates the adhesion to and invasion of epithelial mammalian cells. Utilizes heparinated proteoglycan as a receptor to successfully invade host cells. The sequence is that of Outer membrane protein PagN (pagN) from Salmonella typhimurium (strain LT2 / SGSC1412 / ATCC 700720).